The primary structure comprises 86 residues: MKTLLLTLVVVTIVCLDLGYTMTCYTQYSLSPPTTKTCPDGQNLCYKRWFAFIPHGNKFFRGCAAACPKAEHNEVVRCCARDKCNL.

Positions 1 to 21 are cleaved as a signal peptide; it reads MKTLLLTLVVVTIVCLDLGYT. Disulfide bonds link cysteine 24–cysteine 45, cysteine 38–cysteine 63, cysteine 67–cysteine 78, and cysteine 79–cysteine 84.

It belongs to the three-finger toxin family. Short-chain subfamily. Aminergic toxin sub-subfamily. In terms of assembly, monomer. As to expression, expressed by the venom gland.

It is found in the secreted. Binds to the muscarinic acetylcholine receptor (CHRM). The protein is Muscarinic toxin 38 of Ophiophagus hannah (King cobra).